Here is a 450-residue protein sequence, read N- to C-terminus: Probable glucan endo-1,3-beta-glucosidase eglC (450 aa).

The N-terminal stretch at 1 to 18 (MQFTHLVALALALATSEA) is a signal peptide. The active-site Proton donor is the E128. A glycan (N-linked (GlcNAc...) asparagine) is linked at N183. Catalysis depends on E239, which acts as the Nucleophile. Residues N362 and N368 are each glycosylated (N-linked (GlcNAc...) asparagine). Composition is skewed to low complexity over residues 377–395 (SSAI…SGSS) and 405–420 (ASGQ…SAPS). Residues 377-420 (SSAISGSSSGSAAGSSGSSGSSGSGASGASGQSSSSTGSSSAPS) form a disordered region. The GPI-anchor amidated asparagine moiety is linked to residue N427. Residues 428–450 (AASGLSGSICGAVVAVCLALAAL) constitute a propeptide, removed in mature form.

Belongs to the glycosyl hydrolase 17 family. In terms of processing, the GPI-anchor is attached to the protein in the endoplasmic reticulum and serves to target the protein to the cell surface. There, the glucosamine-inositol phospholipid moiety is cleaved off and the GPI-modified mannoprotein is covalently attached via its lipidless GPI glycan remnant to the 1,6-beta-glucan of the outer cell wall layer.

The protein resides in the cell membrane. The protein localises to the secreted. It localises to the cell wall. It carries out the reaction Hydrolysis of (1-&gt;3)-beta-D-glucosidic linkages in (1-&gt;3)-beta-D-glucans.. Glucanases play a role in cell expansion during growth, in cell-cell fusion during mating, and in spore release during sporulation. This enzyme may be involved in beta-glucan degradation and also function biosynthetically as a transglycosylase. The chain is Probable glucan endo-1,3-beta-glucosidase eglC (eglC) from Aspergillus fumigatus (strain CBS 144.89 / FGSC A1163 / CEA10) (Neosartorya fumigata).